The following is a 103-amino-acid chain: UPF0473 protein LCA_0390 (103 aa).

This sequence belongs to the UPF0473 family.

The sequence is that of UPF0473 protein LCA_0390 from Latilactobacillus sakei subsp. sakei (strain 23K) (Lactobacillus sakei subsp. sakei).